A 537-amino-acid polypeptide reads, in one-letter code: CTP synthase (537 aa).

The amidoligase domain stretch occupies residues 1-265 (MTKFIFVTGG…GKYLIKRLKL (265 aa)). Ser13 is a binding site for CTP. Residue Ser13 coordinates UTP. Residue 14–19 (GLGKGI) coordinates ATP. Tyr54 lines the L-glutamine pocket. Residue Asp71 coordinates ATP. The Mg(2+) site is built by Asp71 and Glu139. CTP contacts are provided by residues 146–148 (DIE), 186–191 (KTKPTQ), and Lys222. Residues 186–191 (KTKPTQ) and Lys222 each bind UTP. A Glutamine amidotransferase type-1 domain is found at 290-532 (EIAIVGKYVK…VRAAKEYKQE (243 aa)). Gly351 contacts L-glutamine. Cys378 functions as the Nucleophile; for glutamine hydrolysis in the catalytic mechanism. L-glutamine contacts are provided by residues 379–382 (FGFQ), Glu402, and Arg459. Residues His505 and Glu507 contribute to the active site.

Belongs to the CTP synthase family. Homotetramer.

The catalysed reaction is UTP + L-glutamine + ATP + H2O = CTP + L-glutamate + ADP + phosphate + 2 H(+). It carries out the reaction L-glutamine + H2O = L-glutamate + NH4(+). It catalyses the reaction UTP + NH4(+) + ATP = CTP + ADP + phosphate + 2 H(+). It functions in the pathway pyrimidine metabolism; CTP biosynthesis via de novo pathway; CTP from UDP: step 2/2. With respect to regulation, allosterically activated by GTP, when glutamine is the substrate; GTP has no effect on the reaction when ammonia is the substrate. The allosteric effector GTP functions by stabilizing the protein conformation that binds the tetrahedral intermediate(s) formed during glutamine hydrolysis. Inhibited by the product CTP, via allosteric rather than competitive inhibition. Its function is as follows. Catalyzes the ATP-dependent amination of UTP to CTP with either L-glutamine or ammonia as the source of nitrogen. Regulates intracellular CTP levels through interactions with the four ribonucleotide triphosphates. This chain is CTP synthase, found in Pyrococcus horikoshii (strain ATCC 700860 / DSM 12428 / JCM 9974 / NBRC 100139 / OT-3).